The chain runs to 375 residues: SSTETPPSYNQLNYNENLLRFFNSKPVTAPVELDPPKVEPSYVSSAREDARSTLSPVQGFEGSGGTGSSGNFTTGSNLHMSSVTNTSNAGTGTSGTGNSGGGGGGGGGAGPGNGAVPPVTLTESLLNKHNDEMEKFMLKKHRESRGRSGEKNKKSANDTLKMVEYSGPGPGPGHGHGIKRGGSHSWEGEANKPKQLLTLNTGGMPPLLDIHTSSASLSKCQASGAGGGGSGSVGGTGNIGSGGSNAQPSTNQYTQSGLSCTQNINLWPPFSVGITTPTSVLSTHTAVAQSSFSTQHNLFPTFYYIPASIAASSPSGTSPNPRPHKHTLVHKSAEQPSTSQAAAATMPLQYMTGLMYPHPSLFYTHPAAAAATAMV.

Disordered regions lie at residues 27 to 119 (VTAP…VPPV), 140 to 189 (KHRE…WEGE), and 219 to 255 (KCQA…QYTQ). Low complexity predominate over residues 69–91 (SGNFTTGSNLHMSSVTNTSNAGT). Positions 92 to 113 (GTSGTGNSGGGGGGGGGAGPGN) are enriched in gly residues. Residues 145–156 (RGRSGEKNKKSA) are compositionally biased toward basic and acidic residues. Residues 224–243 (GAGGGGSGSVGGTGNIGSGG) show a composition bias toward gly residues. Residues 245-255 (NAQPSTNQYTQ) show a composition bias toward polar residues.

In terms of assembly, forms a heterodimer with timeless (TIM); the complex then translocates into the nucleus. Phosphorylated with a circadian rhythmicity, probably by the double-time protein (dbt). Phosphorylation could be implicated in the stability of per monomer and in the formation of heterodimer per-tim.

Its subcellular location is the nucleus. It localises to the cytoplasm. The protein resides in the perinuclear region. Essential for biological clock functions. Determines the period length of circadian and ultradian rhythms; an increase in PER dosage leads to shortened circadian rhythms and a decrease leads to lengthened circadian rhythms. Essential for the circadian rhythmicity of locomotor activity, eclosion behavior, and for the rhythmic component of the male courtship song that originates in the thoracic nervous system. The biological cycle depends on the rhythmic formation and nuclear localization of the TIM-PER complex. Light induces the degradation of TIM, which promotes elimination of PER. Nuclear activity of the heterodimer coordinatively regulates PER and TIM transcription through a negative feedback loop. Behaves as a negative element in circadian transcriptional loop. Does not appear to bind DNA, suggesting indirect transcriptional inhibition. This is Period circadian protein (per) from Drosophila sucinea (Fruit fly).